The primary structure comprises 126 residues: MQRNMLKSKLHRVTTTHAELHYIGSCAIDENLLEAADILEYEEVQIWNVTNGERFATYAIKAERGSGVISVNGSAARRAAPGDLLIIASFAQYEDAELKGHSPKLVFVDGDNRLTEVKGATPTQPA.

Ser-25 serves as the catalytic Schiff-base intermediate with substrate; via pyruvic acid. Ser-25 is modified (pyruvic acid (Ser)). Thr-57 contacts substrate. The active-site Proton donor is Tyr-58. Position 73-75 (73-75 (GSA)) interacts with substrate.

This sequence belongs to the PanD family. As to quaternary structure, heterooctamer of four alpha and four beta subunits. It depends on pyruvate as a cofactor. In terms of processing, is synthesized initially as an inactive proenzyme, which is activated by self-cleavage at a specific serine bond to produce a beta-subunit with a hydroxyl group at its C-terminus and an alpha-subunit with a pyruvoyl group at its N-terminus.

Its subcellular location is the cytoplasm. It carries out the reaction L-aspartate + H(+) = beta-alanine + CO2. The protein operates within cofactor biosynthesis; (R)-pantothenate biosynthesis; beta-alanine from L-aspartate: step 1/1. Its function is as follows. Catalyzes the pyruvoyl-dependent decarboxylation of aspartate to produce beta-alanine. This chain is Aspartate 1-decarboxylase, found in Chromobacterium violaceum (strain ATCC 12472 / DSM 30191 / JCM 1249 / CCUG 213 / NBRC 12614 / NCIMB 9131 / NCTC 9757 / MK).